A 148-amino-acid chain; its full sequence is Putative nickel-responsive regulator (148 aa).

Positions 76, 87, 89, and 95 each coordinate Ni(2+).

The protein belongs to the transcriptional regulatory CopG/NikR family. Ni(2+) is required as a cofactor.

Transcriptional regulator. The protein is Putative nickel-responsive regulator of Rhodopseudomonas palustris (strain ATCC BAA-98 / CGA009).